We begin with the raw amino-acid sequence, 714 residues long: G protein-coupled receptor kinase 2 (714 aa).

The tract at residues 1 to 308 (MELENIVANT…LEAQPITYKT (308 aa)) is N-terminal. RGS domains are found at residues 53–174 (YGYV…SQHS) and 177–294 (INHK…HRYL). The segment at 141-229 (SNANPTETAE…GGGEGGGGGK (89 aa)) is disordered. Positions 154 to 175 (CNNTTANNCNNINNSNNSQHSS) are enriched in low complexity. 2 stretches are compositionally biased toward basic and acidic residues: residues 176-190 (DINH…HNGD) and 199-220 (HQDD…EKGG). Positions 309-574 (FRMYRVLGKG…GQDVMAHPFF (266 aa)) constitute a Protein kinase domain. ATP is bound by residues 315 to 323 (LGKGGFGEV) and Lys338. Residue Asp435 is the Proton acceptor of the active site. In terms of domain architecture, AGC-kinase C-terminal spans 577–642 (TQLNWRRLEA…GSVSISWQNE (66 aa)). Ser612 carries the post-translational modification Phosphoserine. Thr613 carries the post-translational modification Phosphothreonine. Residues 667–714 (INAAPEPDKAGCFPFRRKKKQPARTQPIPIPEHLLTTSHSVSSTTVES) are disordered. The segment covering 698–714 (EHLLTTSHSVSSTTVES) has biased composition (low complexity).

Belongs to the protein kinase superfamily. AGC Ser/Thr protein kinase family. GPRK subfamily. In terms of tissue distribution, expressed in all larval tissues and in adult ovaries. Larval CNS staining is localized to axons projecting to the optic lobes and the mushroom bodies, in the longitudinal connectives, and in cell bodies and nerves of the ring gland corpus allatum. Adult CNS staining is detectable only in cell bodies and processes associated with the ellipsoid body of the central complex and portions of the mushroom bodies. In the wing disk, expression is confined to a stripe that parallels the anterior/posterior boundary of the wing blade and the hinge region, and weak expression in the prospective notum.

It is found in the membrane. The catalysed reaction is [G-protein-coupled receptor] + ATP = [G-protein-coupled receptor]-phosphate + ADP + H(+). Functionally, specifically phosphorylates the activated forms of G protein-coupled receptors. Required during oogenesis and embryogenesis; component of a signaling pathway that functions during egg chamber maturation. The sequence is that of G protein-coupled receptor kinase 2 (Gprk2) from Drosophila melanogaster (Fruit fly).